The sequence spans 202 residues: uncharacterized protein (202 aa).

Residues 118–202 form a disordered region; sequence SSVSPVSSKK…KVSGTKKVKA (85 aa). Ser-121 bears the Phosphoserine mark. Basic residues-rich tracts occupy residues 142–163 and 186–202; these read EKSK…KSKR and SSKS…KVKA.

The protein localises to the nucleus. It is found in the nucleolus. This is an uncharacterized protein from Schizosaccharomyces pombe (strain 972 / ATCC 24843) (Fission yeast).